A 358-amino-acid polypeptide reads, in one-letter code: CCAAT/enhancer-binding protein alpha (358 aa).

The tract at residues 1–55 is disordered; that stretch reads MESADFYEAEPRPPMSSHLQSPPHAPSSAAFGFPRGAGPAQPPAPPAAPEPLGGI. The interval 1-70 is required to repress E2F1:TFDP1-mediated transcription, to inhibit cell cycle and to induce adipocyte differentiation; it reads MESADFYEAE…SIDISAYIDP (70 aa). Residues 29 to 39 are compositionally biased toward low complexity; the sequence is AAFGFPRGAGP. The span at 40-49 shows a compositional bias: pro residues; that stretch reads AQPPAPPAAP. The interval 54–72 is required for interaction with TRIB1; the sequence is GICEHETSIDISAYIDPAA. The required to induce adipocyte differentiation stretch occupies residues 128–204; sequence PPGYGCAAAG…HPPPAHLAAP (77 aa). The residue at position 161 (K161) is an N6-acetyllysine; alternate. K161 participates in a covalent cross-link: Glycyl lysine isopeptide (Lys-Gly) (interchain with G-Cter in SUMO2); alternate. 2 disordered regions span residues 178–201 and 217–291; these read LFPY…PAHL and TMHL…RRER. Pro residues-rich tracts occupy residues 181 to 199 and 224 to 238; these read YQPP…PPPA and HPTP…PHPA. Residues 182–198 form a required to functionally cooperate with SREBF1 in promoter activation region; it reads QPPPPPPPSHPHPHPPP. S190 carries the phosphoserine modification. T226 and T230 each carry phosphothreonine; by GSK3. At S234 the chain carries Phosphoserine; by GSK3. Low complexity predominate over residues 239 to 259; sequence PALGAAGLPGPGSALKGLGAA. The interaction with FOXO1 stretch occupies residues 244–358; sequence AGLPGPGSAL…SLVKAMGNCA (115 aa). Residues 276–291 show a composition bias toward basic and acidic residues; the sequence is KSVDKNSNEYRVRRER. Residues 282–345 enclose the bZIP domain; sequence SNEYRVRRER…DTLRGIFRQL (64 aa). The DNA-binding element occupies 285–300; that stretch reads YRVRRERNNIAVRKSR. Residues 286–313 form a basic motif region; it reads RVRRERNNIAVRKSRDKAKQRNVETQQK. Residues 317 to 345 form a leucine-zipper region; sequence LTSDNDRLRKRVEQLSRELDTLRGIFRQL.

Belongs to the bZIP family. C/EBP subfamily. Binds DNA as a homodimer and as a heterodimer. Can form stable heterodimers with CEBPB, CEBPD, CEBPE and CEBPG. Interacts with PRDM16. Interacts with UBN1. Interacts with ZNF638; this interaction increases transcriptional activation. Interacts with the complex TFDP2:E2F1; the interaction prevents CEBPA binding to target gene promoters and represses its transcriptional activity. Interacts with RB1. Interacts (when phosphorylated at Ser-190) with CDK2, CDK4, E2F4 and SMARCA2. Interacts with SREBPF1. Interacts with FOXO1 (via the Fork-head domain); the interaction increases when FOXO1 is deacetylated. Interacts with SIX1. Interacts (via recognition sequence) with TRIB1. Interacts (via bZIP domain) with OVOL2 (via zinc-finger domains); the interaction inhibits the transcription factor activity of CEBPA and is required to repress adipogenesis. In terms of assembly, interacts with TAF1A and UBTF. As to quaternary structure, interacts with TAF1A and UBTF. Interacts with NPM1. (Microbial infection) Interacts with HBV protein X. In terms of assembly, (Microbial infection) Interacts with Epstein-Barr virus lytic switch protein BZLF1; this interaction induces G1 cell cycle arrest. Phosphorylation at Ser-190 is required for interaction with CDK2, CDK4 and SWI/SNF complex leading to cell cycle inhibition. Dephosphorylated at Ser-190 by protein phosphatase 2A (PP2A) through PI3K/AKT signaling pathway regulation. Phosphorylation at Thr-226 and Thr-230 by GSK3 is constitutive in adipose tissue and lung. In liver, both Thr-226 and Thr-230 are phosphorylated only during feeding but not during fasting. Phosphorylation of the GSK3 consensus sites selectively decreases transactivation activity on IRE-controlled promoters. In terms of processing, sumoylated, sumoylation blocks the inhibitory effect on cell proliferation by disrupting the interaction with SMARCA2. Post-translationally, ubiquitinated by COP1 upon interaction with TRIB1.

It localises to the nucleus. It is found in the nucleolus. Transcription factor that coordinates proliferation arrest and the differentiation of myeloid progenitors, adipocytes, hepatocytes, and cells of the lung and the placenta. Binds directly to the consensus DNA sequence 5'-T[TG]NNGNAA[TG]-3' acting as an activator on distinct target genes. During early embryogenesis, plays essential and redundant functions with CEBPB. Essential for the transition from common myeloid progenitors (CMP) to granulocyte/monocyte progenitors (GMP). Critical for the proper development of the liver and the lung. Necessary for terminal adipocyte differentiation, is required for postnatal maintenance of systemic energy homeostasis and lipid storage. To regulate these different processes at the proper moment and tissue, interplays with other transcription factors and modulators. Down-regulates the expression of genes that maintain cells in an undifferentiated and proliferative state through E2F1 repression, which is critical for its ability to induce adipocyte and granulocyte terminal differentiation. Reciprocally E2F1 blocks adipocyte differentiation by binding to specific promoters and repressing CEBPA binding to its target gene promoters. Proliferation arrest also depends on a functional binding to SWI/SNF complex. In liver, regulates gluconeogenesis and lipogenesis through different mechanisms. To regulate gluconeogenesis, functionally cooperates with FOXO1 binding to IRE-controlled promoters and regulating the expression of target genes such as PCK1 or G6PC1. To modulate lipogenesis, interacts and transcriptionally synergizes with SREBF1 in promoter activation of specific lipogenic target genes such as ACAS2. In adipose tissue, seems to act as FOXO1 coactivator accessing to ADIPOQ promoter through FOXO1 binding sites. In terms of biological role, can act as dominant-negative. Binds DNA and have transctivation activity, even if much less efficiently than isoform 2. Does not inhibit cell proliferation. Its function is as follows. Directly and specifically enhances ribosomal DNA transcription interacting with RNA polymerase I-specific cofactors and inducing histone acetylation. This chain is CCAAT/enhancer-binding protein alpha, found in Homo sapiens (Human).